Here is a 502-residue protein sequence, read N- to C-terminus: Lysine--tRNA ligase (502 aa).

Residues Glu-409 and Glu-416 each coordinate Mg(2+).

This sequence belongs to the class-II aminoacyl-tRNA synthetase family. As to quaternary structure, homodimer. Mg(2+) serves as cofactor.

It is found in the cytoplasm. It catalyses the reaction tRNA(Lys) + L-lysine + ATP = L-lysyl-tRNA(Lys) + AMP + diphosphate. The sequence is that of Lysine--tRNA ligase from Shouchella clausii (strain KSM-K16) (Alkalihalobacillus clausii).